A 475-amino-acid polypeptide reads, in one-letter code: Aspartyl/glutamyl-tRNA(Asn/Gln) amidotransferase subunit B (475 aa).

This sequence belongs to the GatB/GatE family. GatB subfamily. In terms of assembly, heterotrimer of A, B and C subunits.

It catalyses the reaction L-glutamyl-tRNA(Gln) + L-glutamine + ATP + H2O = L-glutaminyl-tRNA(Gln) + L-glutamate + ADP + phosphate + H(+). The enzyme catalyses L-aspartyl-tRNA(Asn) + L-glutamine + ATP + H2O = L-asparaginyl-tRNA(Asn) + L-glutamate + ADP + phosphate + 2 H(+). Functionally, allows the formation of correctly charged Asn-tRNA(Asn) or Gln-tRNA(Gln) through the transamidation of misacylated Asp-tRNA(Asn) or Glu-tRNA(Gln) in organisms which lack either or both of asparaginyl-tRNA or glutaminyl-tRNA synthetases. The reaction takes place in the presence of glutamine and ATP through an activated phospho-Asp-tRNA(Asn) or phospho-Glu-tRNA(Gln). The protein is Aspartyl/glutamyl-tRNA(Asn/Gln) amidotransferase subunit B of Bacillus mycoides (strain KBAB4) (Bacillus weihenstephanensis).